The sequence spans 161 residues: Cytochrome c-type biogenesis protein CcmE (161 aa).

At 1 to 8 (MNPVRKKR) the chain is on the cytoplasmic side. Residues 9 to 29 (LYIVLAILCGVSIAVALALTA) traverse the membrane as a helical; Signal-anchor for type II membrane protein segment. Residues 30–161 (LQENINLFYT…AKGYQQESAQ (132 aa)) are Periplasmic-facing. Heme contacts are provided by His-124 and Tyr-128.

The protein belongs to the CcmE/CycJ family.

It is found in the cell inner membrane. In terms of biological role, heme chaperone required for the biogenesis of c-type cytochromes. Transiently binds heme delivered by CcmC and transfers the heme to apo-cytochromes in a process facilitated by CcmF and CcmH. This chain is Cytochrome c-type biogenesis protein CcmE, found in Ectopseudomonas mendocina (strain ymp) (Pseudomonas mendocina).